Here is a 156-residue protein sequence, read N- to C-terminus: Arginine repressor (156 aa).

The protein belongs to the ArgR family.

Its subcellular location is the cytoplasm. The protein operates within amino-acid biosynthesis; L-arginine biosynthesis [regulation]. Regulates arginine biosynthesis genes. This is Arginine repressor from Yersinia enterocolitica serotype O:8 / biotype 1B (strain NCTC 13174 / 8081).